Consider the following 466-residue polypeptide: MASKSDVNIIETSSKVHFSGFHQMDGLASNRPEQMAEEEEHGQPFVIGVAGGAASGKTTVCDMIMQQLHDQRAVVVNQDSFYHNVNEVELVRVHDYNFDHPDAFDTEQLLSSMEKLRKGQAVDIPNYDFKSYKNNVFPPRRVNPSDVIILEGILIFHDPRVRDLMNMKIFVDADADVRLARRIKRDTVEKGRDIATVLDQYSKFVKPAFEDFILPTKKYADIIIPRGGDNHVAIDLIVQHIHTKLGQHDLCKIYPNLYVIQSTFQIRGMHTLIRDSKTTKHDFIFYSDRLIRLVVEHGLGHLPFTEKQVVTPTGSVYSGVDFCKKLCGVSVIRSGESMENALRACCKGIKIGKILIHREGDNGQQLIYEKLPSDISERHVLLLDPILGTGNSAVQAIRLLISKGVPESNIIFLNLISAPEGVNVVCKKFPRIKIVTSEIELGLNDEFRVVPGMGEFGDRYFGTDDE.

Residues 41 to 246 (HGQPFVIGVA…IVQHIHTKLG (206 aa)) are uridine kinase. Positions 256-466 (NLYVIQSTFQ…GDRYFGTDDE (211 aa)) are uracil phosphoribosyltransferase. Residues Lys-280, Arg-289, and 323 to 326 (CKKL) each bind GTP. Positions 333 and 358 each coordinate 5-phospho-alpha-D-ribose 1-diphosphate. Arg-378 is a binding site for GTP. Residues Asp-384, 389-392 (TGNS), and Glu-455 each bind 5-phospho-alpha-D-ribose 1-diphosphate. 454–456 (GEF) lines the uracil pocket.

The protein in the N-terminal section; belongs to the uridine kinase family. This sequence in the C-terminal section; belongs to the UPRTase family. Requires Mg(2+) as cofactor.

The enzyme catalyses UMP + diphosphate = 5-phospho-alpha-D-ribose 1-diphosphate + uracil. It catalyses the reaction cytidine + ATP = CMP + ADP + H(+). It carries out the reaction uridine + ATP = UMP + ADP + H(+). It functions in the pathway pyrimidine metabolism; UMP biosynthesis via salvage pathway; UMP from uracil: step 1/1. Its pathway is pyrimidine metabolism; CTP biosynthesis via salvage pathway; CTP from cytidine: step 1/3. The protein operates within pyrimidine metabolism; UMP biosynthesis via salvage pathway; UMP from uridine: step 1/1. With respect to regulation, allosterically activated by GTP. Functionally, involved in the pyrimidine salvage pathway. The uracil phosphoribosyltransferase (UPRT) activity, that catalyzes the conversion of uracil and 5-phospho-alpha-D-ribose 1-diphosphate (PRPP) to UMP and diphosphate, is unsure. The chain is Uridine kinase-like protein 3 (UKL3) from Arabidopsis thaliana (Mouse-ear cress).